The chain runs to 127 residues: Large ribosomal subunit protein mL55 (127 aa).

The transit peptide at 1 to 32 (MPLAILLSLLRHCGVRAALPTPRHLHTSPWRA) directs the protein to the mitochondrion. S84 is subject to Phosphoserine.

Belongs to the mitochondrion-specific ribosomal protein mL55 family. In terms of assembly, component of the mitochondrial ribosome large subunit (39S) which comprises a 16S rRNA and about 50 distinct proteins.

Its subcellular location is the mitochondrion. The polypeptide is Large ribosomal subunit protein mL55 (Mrpl55) (Mus musculus (Mouse)).